The sequence spans 105 residues: Large ribosomal subunit protein uL24 (105 aa).

Basic and acidic residues predominate over residues 77-93; sequence DGKPTRVGYRKDDETGK. Residues 77 to 105 form a disordered region; that stretch reads DGKPTRVGYRKDDETGKNVRIAKSNGKDL.

Belongs to the universal ribosomal protein uL24 family. As to quaternary structure, part of the 50S ribosomal subunit.

In terms of biological role, one of two assembly initiator proteins, it binds directly to the 5'-end of the 23S rRNA, where it nucleates assembly of the 50S subunit. Its function is as follows. One of the proteins that surrounds the polypeptide exit tunnel on the outside of the subunit. The polypeptide is Large ribosomal subunit protein uL24 (Mycolicibacterium gilvum (strain PYR-GCK) (Mycobacterium gilvum (strain PYR-GCK))).